We begin with the raw amino-acid sequence, 510 residues long: Light-independent protochlorophyllide reductase subunit B (510 aa).

A [4Fe-4S] cluster-binding site is contributed by D36. The active-site Proton donor is the D297. Substrate is bound at residue 432-433 (GM).

The protein belongs to the ChlB/BchB/BchZ family. Protochlorophyllide reductase is composed of three subunits; ChlL, ChlN and ChlB. Forms a heterotetramer of two ChlB and two ChlN subunits. [4Fe-4S] cluster is required as a cofactor.

Its subcellular location is the plastid. The protein localises to the chloroplast. It catalyses the reaction chlorophyllide a + oxidized 2[4Fe-4S]-[ferredoxin] + 2 ADP + 2 phosphate = protochlorophyllide a + reduced 2[4Fe-4S]-[ferredoxin] + 2 ATP + 2 H2O. The protein operates within porphyrin-containing compound metabolism; chlorophyll biosynthesis (light-independent). Its function is as follows. Component of the dark-operative protochlorophyllide reductase (DPOR) that uses Mg-ATP and reduced ferredoxin to reduce ring D of protochlorophyllide (Pchlide) to form chlorophyllide a (Chlide). This reaction is light-independent. The NB-protein (ChlN-ChlB) is the catalytic component of the complex. The protein is Light-independent protochlorophyllide reductase subunit B of Pinus koraiensis (Korean pine).